The primary structure comprises 253 residues: Ubiquinone/menaquinone biosynthesis C-methyltransferase UbiE (253 aa).

S-adenosyl-L-methionine is bound by residues threonine 76, aspartate 97, 125 to 126 (NA), and serine 142.

The protein belongs to the class I-like SAM-binding methyltransferase superfamily. MenG/UbiE family.

It catalyses the reaction a 2-demethylmenaquinol + S-adenosyl-L-methionine = a menaquinol + S-adenosyl-L-homocysteine + H(+). The catalysed reaction is a 2-methoxy-6-(all-trans-polyprenyl)benzene-1,4-diol + S-adenosyl-L-methionine = a 5-methoxy-2-methyl-3-(all-trans-polyprenyl)benzene-1,4-diol + S-adenosyl-L-homocysteine + H(+). The protein operates within quinol/quinone metabolism; menaquinone biosynthesis; menaquinol from 1,4-dihydroxy-2-naphthoate: step 2/2. It participates in cofactor biosynthesis; ubiquinone biosynthesis. In terms of biological role, methyltransferase required for the conversion of demethylmenaquinol (DMKH2) to menaquinol (MKH2) and the conversion of 2-polyprenyl-6-methoxy-1,4-benzoquinol (DDMQH2) to 2-polyprenyl-3-methyl-6-methoxy-1,4-benzoquinol (DMQH2). The sequence is that of Ubiquinone/menaquinone biosynthesis C-methyltransferase UbiE from Xylella fastidiosa (strain 9a5c).